The following is a 396-amino-acid chain: 3-hydroxykynurenine transaminase (396 aa).

A binds to and confers specificity for 3-hydroxykynurenine; shared with dimeric partner region spans residues 43 to 44 (SN). Residues 77 to 79 (SAH), serine 154, and glutamine 204 each bind pyridoxal 5'-phosphate. A substrate-binding site is contributed by serine 154. Lysine 205 is modified (N6-(pyridoxal phosphate)lysine). 2 residues coordinate pyridoxal 5'-phosphate: tyrosine 256 and threonine 259. A substrate-binding site is contributed by arginine 356.

Belongs to the class-V pyridoxal-phosphate-dependent aminotransferase family. In terms of assembly, homodimer. Pyridoxal 5'-phosphate is required as a cofactor. In terms of tissue distribution, expressed in gut and ovaries.

Its subcellular location is the peroxisome. The catalysed reaction is L-kynurenine + glyoxylate = kynurenate + glycine + H2O. It catalyses the reaction 3-hydroxy-L-kynurenine + glyoxylate = xanthurenate + glycine + H2O. It carries out the reaction 3-hydroxy-L-kynurenine + pyruvate = xanthurenate + L-alanine + H2O. The enzyme catalyses glyoxylate + L-alanine = glycine + pyruvate. It participates in amino-acid degradation; L-kynurenine degradation; kynurenate from L-kynurenine: step 1/2. Functionally, catalyzes the pyridoxal 5'-phosphate-dependent transamination of both 3-hydroxykynurenine and L-kynurenine to xanthurenic acid and kynurenic acid, respectively, preferentially using the alpha-ketoacid glyoxylate as the amino group acceptor. Although glyoxylate is the preferred amino group acceptor, transamination of 3-hydroxykynurenine also works with pyruvate as the amino acceptor in vitro. Involved in the detoxification of cytotoxic metabolite 3-hydroxykynurenine generated by the hydroxylation of L-kynurenine, an intermediate in the tryptophan catabolism pathway. The Plasmodium parasite uses xanthurenic acid produced in the midgut to activate its gametocytes ingested during a blood meal. Also catalyzes, although with a lesser efficiency, the transamination of alanine with glyoxylate as an amino group acceptor. May play a role in the detoxification of glyoxylate, a toxic plant metabolite from the diet. The protein is 3-hydroxykynurenine transaminase of Anopheles gambiae (African malaria mosquito).